Reading from the N-terminus, the 424-residue chain is Histidine--tRNA ligase (424 aa).

The protein belongs to the class-II aminoacyl-tRNA synthetase family. In terms of assembly, homodimer.

The protein resides in the cytoplasm. It catalyses the reaction tRNA(His) + L-histidine + ATP = L-histidyl-tRNA(His) + AMP + diphosphate + H(+). This is Histidine--tRNA ligase from Shigella boydii serotype 18 (strain CDC 3083-94 / BS512).